Here is a 1303-residue protein sequence, read N- to C-terminus: Protein STU1 (1303 aa).

3 disordered regions span residues 239–259 (RGSDPEPHVQRANTPRSNTPV), 531–664 (SQRE…GAVS), and 953–977 (EASDSSPQKQSQMDQISSKRSNSEH). The segment covering 249–259 (RANTPRSNTPV) has biased composition (polar residues). The segment covering 554–568 (SLKEAILEKNKELRQ) has biased composition (basic and acidic residues). Positions 573–583 (SRNSGEQSTKI) are enriched in polar residues. The segment covering 596-609 (SRLEKSLLRPDVGH) has biased composition (basic and acidic residues). Polar residues predominate over residues 618–629 (SSWTYPSTQSGP). A compositionally biased stretch (basic and acidic residues) spans 634–648 (KQRERSKTEVHKKSP). 2 stretches are compositionally biased toward polar residues: residues 653–664 (RPSSRLDTGAVS) and 955–972 (SDSSPQKQSQMDQISSKR).

This sequence belongs to the CLASP family. As to quaternary structure, interacts with microtubules.

The protein localises to the cytoplasm. It localises to the cytoskeleton. The protein resides in the nucleus. Its subcellular location is the spindle. Functionally, microtubule binding protein that promotes the stabilization of dynamic microtubules. Required for mitotic spindle formation. This chain is Protein STU1 (STU1), found in Candida albicans (strain SC5314 / ATCC MYA-2876) (Yeast).